Here is a 266-residue protein sequence, read N- to C-terminus: Type III pantothenate kinase (266 aa).

Residue 6-13 (DIGNSRIK) participates in ATP binding. Residues Y94 and 101–104 (GIDR) each bind substrate. D103 serves as the catalytic Proton acceptor. A K(+)-binding site is contributed by D128. T131 lines the ATP pocket. T183 lines the substrate pocket.

Belongs to the type III pantothenate kinase family. As to quaternary structure, homodimer. NH4(+) serves as cofactor. It depends on K(+) as a cofactor.

Its subcellular location is the cytoplasm. It catalyses the reaction (R)-pantothenate + ATP = (R)-4'-phosphopantothenate + ADP + H(+). It participates in cofactor biosynthesis; coenzyme A biosynthesis; CoA from (R)-pantothenate: step 1/5. Its function is as follows. Catalyzes the phosphorylation of pantothenate (Pan), the first step in CoA biosynthesis. In Nitrosococcus oceani (strain ATCC 19707 / BCRC 17464 / JCM 30415 / NCIMB 11848 / C-107), this protein is Type III pantothenate kinase.